Consider the following 301-residue polypeptide: Polyamine aminopropyltransferase (301 aa).

The PABS domain occupies W4–V240. Q33 lines the S-methyl-5'-thioadenosine pocket. The spermidine site is built by H64 and E89. S-methyl-5'-thioadenosine-binding positions include D109 and D141 to G142. D159 serves as the catalytic Proton acceptor.

The protein belongs to the spermidine/spermine synthase family. In terms of assembly, homotrimer.

The protein resides in the cytoplasm. The enzyme catalyses S-adenosyl 3-(methylsulfanyl)propylamine + putrescine = S-methyl-5'-thioadenosine + spermidine + H(+). It catalyses the reaction S-adenosyl 3-(methylsulfanyl)propylamine + propane-1,3-diamine = norspermidine + S-methyl-5'-thioadenosine + H(+). The catalysed reaction is norspermidine + S-adenosyl 3-(methylsulfanyl)propylamine = norspermine + S-methyl-5'-thioadenosine + H(+). It carries out the reaction S-adenosyl 3-(methylsulfanyl)propylamine + spermidine = thermospermine + S-methyl-5'-thioadenosine + H(+). The protein operates within amine and polyamine biosynthesis; spermidine biosynthesis; spermidine from putrescine: step 1/1. Competitively inhibited by 5-methylthioadenosine, 5-methylthiotubercidin, S-adenosyl(5)-3-thiopropylamine and S-adenosyl-3-thio-l,8-diaminooctane. In terms of biological role, involved in the biosynthesis of polyamines which are thought to support the growth of thermophilic microorganisms under high-temperature conditions. It seems that long-chain and branched-chain of polyamines effectively stabilize DNA and RNA, respectively. Catalyzes the irreversible transfer of a propylamine group from the amino donor S-adenosylmethioninamine (decarboxy-AdoMet) to various amine acceptors such as putrescine (1,4-diaminobutane), 1,3-diaminopropane, sym-norspermidine and spermidine. The biosynthesis of caldopentamine from norspermine has been also observed, but with a very low activity. The reaction involves a nucleophilic attack on the C-3 methylene of the propylamine moiety adjacent to the positively charged sulfur of decarboxy-AdoMet. S-adenosylmethioninamine is the only amino donor. The sequence is that of Polyamine aminopropyltransferase from Saccharolobus solfataricus (strain ATCC 35092 / DSM 1617 / JCM 11322 / P2) (Sulfolobus solfataricus).